The primary structure comprises 321 residues: Aspartate carbamoyltransferase catalytic subunit (321 aa).

Carbamoyl phosphate contacts are provided by arginine 60 and threonine 61. Residue lysine 88 participates in L-aspartate binding. Residues arginine 110, histidine 138, and glutamine 141 each coordinate carbamoyl phosphate. L-aspartate is bound by residues arginine 171 and arginine 225. Residues glycine 266 and proline 267 each coordinate carbamoyl phosphate.

Belongs to the aspartate/ornithine carbamoyltransferase superfamily. ATCase family. In terms of assembly, heterododecamer (2C3:3R2) of six catalytic PyrB chains organized as two trimers (C3), and six regulatory PyrI chains organized as three dimers (R2).

It catalyses the reaction carbamoyl phosphate + L-aspartate = N-carbamoyl-L-aspartate + phosphate + H(+). Its pathway is pyrimidine metabolism; UMP biosynthesis via de novo pathway; (S)-dihydroorotate from bicarbonate: step 2/3. Functionally, catalyzes the condensation of carbamoyl phosphate and aspartate to form carbamoyl aspartate and inorganic phosphate, the committed step in the de novo pyrimidine nucleotide biosynthesis pathway. The sequence is that of Aspartate carbamoyltransferase catalytic subunit from Sorangium cellulosum (strain So ce56) (Polyangium cellulosum (strain So ce56)).